The sequence spans 253 residues: MSESSEKTSTTHFGFRQVAAKDKKTLVAEVFTSVSRRYDLMNDLMSLGIHRAWKRYFVATAQVKSGDRVLDLAGGTGDIAMLLKNRVGAEGSIVLGDINASMLSVGRDRLIDRGVVARLEYVQCNAEALPFQDKCFDLVTMSFGLRNVTDKDTALREMFRVLKVGGQARVLEFSTVTAEWFKPIYDFHSFQVLPRLGWLFARDAASYRYLAESIRKHPPQEELQAMMGAAGFERCGYRNLTGGIVAIHSGYKY.

S-adenosyl-L-methionine-binding positions include threonine 76, aspartate 97, asparagine 125–alanine 126, and serine 142.

It belongs to the class I-like SAM-binding methyltransferase superfamily. MenG/UbiE family.

It catalyses the reaction a 2-demethylmenaquinol + S-adenosyl-L-methionine = a menaquinol + S-adenosyl-L-homocysteine + H(+). The catalysed reaction is a 2-methoxy-6-(all-trans-polyprenyl)benzene-1,4-diol + S-adenosyl-L-methionine = a 5-methoxy-2-methyl-3-(all-trans-polyprenyl)benzene-1,4-diol + S-adenosyl-L-homocysteine + H(+). It participates in quinol/quinone metabolism; menaquinone biosynthesis; menaquinol from 1,4-dihydroxy-2-naphthoate: step 2/2. It functions in the pathway cofactor biosynthesis; ubiquinone biosynthesis. Methyltransferase required for the conversion of demethylmenaquinol (DMKH2) to menaquinol (MKH2) and the conversion of 2-polyprenyl-6-methoxy-1,4-benzoquinol (DDMQH2) to 2-polyprenyl-3-methyl-6-methoxy-1,4-benzoquinol (DMQH2). In Xylella fastidiosa (strain M12), this protein is Ubiquinone/menaquinone biosynthesis C-methyltransferase UbiE.